A 160-amino-acid chain; its full sequence is Large ribosomal subunit protein eL21 (160 aa).

It belongs to the eukaryotic ribosomal protein eL21 family.

This Encephalitozoon cuniculi (strain GB-M1) (Microsporidian parasite) protein is Large ribosomal subunit protein eL21 (RPL21).